The primary structure comprises 808 residues: Piwi-like protein 1 (808 aa).

Residues 214–333 enclose the PAZ domain; it reads RINRVLNENN…IPGELCYLCG (120 aa). The interval 300-322 is disordered; the sequence is SMVRPKEKTENEPEGPTETDQSL. One can recognise a Piwi domain in the interval 492 to 790; the sequence is HMALVFIPDD…LAELVGKIHR (299 aa).

Belongs to the argonaute family. Piwi subfamily. As to expression, expressed in dividing adult somatic stem cells (neoblasts).

The sequence is that of Piwi-like protein 1 (wi-1) from Schmidtea mediterranea (Freshwater planarian flatworm).